A 553-amino-acid polypeptide reads, in one-letter code: MDNSVILIDDSQNSVVIVDDDVEDGELEDDVVFVCPEELTRKEIEPPTDKIEEKHSNTSIQDTTEEDGDSLVFEVRFNKEAHFTSLQQQVLVALEGAFADKQIVFRDNPQELMISAFERSRTLPEEEPQDLFLIDTQPAAKLNAANVPSYKRCNADILDEQTEERKKLKAEAVNKCFRPKAQSSCFNCGDTEHSLRDCTKPRNNSRITRARKKMTSRTERYHVDTEQRFGHIRPGKISTKTRHAMGYSRGQLPFIFYRMRVLGYPPAWLEEAKVQSSGIALFNADGSEVTKSDEEEGESETFKYDVNKIVEYPGFNVQPKANCFDDFKHHNVPPFQESQSKENFIKSLGENVINGYKRKKLVDLPAPHDRVPAPSELLTSFDDYDMELEEETEDPPLPPSVPPPQPPPPEECEDGELTARSPSPSLEDLKAQQEELLQELDVNASHNTTANESKSPTDLDDTSETEVGPSAAESGNNEQSRSAPSTPFKASYEGTPLLKFSVYDRLPVGSNFKVGVSDVINFENLPDSTGKYEQMKDLLKNVREKMVKLQNEN.

Serine 59 is subject to Phosphoserine. A CCHC-type zinc finger spans residues 183 to 200 (SSCFNCGDTEHSLRDCTK). Serine 292 and serine 347 each carry phosphoserine. Tyrosine 356 is subject to Phosphotyrosine. The disordered stretch occupies residues 388-492 (LEEETEDPPL…APSTPFKASY (105 aa)). Residues 395 to 409 (PPLPPSVPPPQPPPP) show a composition bias toward pro residues. Serine 421 and serine 423 each carry phosphoserine. 2 stretches are compositionally biased toward polar residues: residues 444–456 (ASHN…SKSP) and 473–485 (ESGN…SAPS).

This sequence belongs to the ZCCHC8 family.

Its subcellular location is the nucleus. The protein resides in the nucleoplasm. Functionally, scaffolding subunit of the trimeric nuclear exosome targeting (NEXT) complex, a complex that directs a subset of non-coding short-lived RNAs for exosomal degradation. The RNA exosome is fundamental for the degradation of RNA in eukaryotic nuclei. May be involved in pre-mRNA splicing. The polypeptide is Zinc finger CCHC domain-containing protein 8 homolog (Drosophila melanogaster (Fruit fly)).